A 145-amino-acid polypeptide reads, in one-letter code: 3-hydroxyacyl-[acyl-carrier-protein] dehydratase FabZ (145 aa).

His47 is an active-site residue.

This sequence belongs to the thioester dehydratase family. FabZ subfamily.

The protein localises to the cytoplasm. It carries out the reaction a (3R)-hydroxyacyl-[ACP] = a (2E)-enoyl-[ACP] + H2O. In terms of biological role, involved in unsaturated fatty acids biosynthesis. Catalyzes the dehydration of short chain beta-hydroxyacyl-ACPs and long chain saturated and unsaturated beta-hydroxyacyl-ACPs. The polypeptide is 3-hydroxyacyl-[acyl-carrier-protein] dehydratase FabZ (Aromatoleum aromaticum (strain DSM 19018 / LMG 30748 / EbN1) (Azoarcus sp. (strain EbN1))).